A 237-amino-acid chain; its full sequence is 1-(5-phosphoribosyl)-5-[(5-phosphoribosylamino)methylideneamino] imidazole-4-carboxamide isomerase (237 aa).

Asp-8 serves as the catalytic Proton acceptor. The active-site Proton donor is the Asp-128.

The protein belongs to the HisA/HisF family.

The protein resides in the cytoplasm. The enzyme catalyses 1-(5-phospho-beta-D-ribosyl)-5-[(5-phospho-beta-D-ribosylamino)methylideneamino]imidazole-4-carboxamide = 5-[(5-phospho-1-deoxy-D-ribulos-1-ylimino)methylamino]-1-(5-phospho-beta-D-ribosyl)imidazole-4-carboxamide. It functions in the pathway amino-acid biosynthesis; L-histidine biosynthesis; L-histidine from 5-phospho-alpha-D-ribose 1-diphosphate: step 4/9. This Gemmatimonas aurantiaca (strain DSM 14586 / JCM 11422 / NBRC 100505 / T-27) protein is 1-(5-phosphoribosyl)-5-[(5-phosphoribosylamino)methylideneamino] imidazole-4-carboxamide isomerase.